We begin with the raw amino-acid sequence, 237 residues long: Putative HTH-type transcriptional regulator ycf28 (237 aa).

An HTH crp-type domain is found at 155-228; that stretch reads KSITNRLISL…KKKVIIHDPI (74 aa). Positions 188–207 form a DNA-binding region, H-T-H motif; the sequence is HKVLAQIIGSNRVSITRIIS.

The protein localises to the plastid. It is found in the chloroplast. The protein is Putative HTH-type transcriptional regulator ycf28 (ycf28) of Porphyra purpurea (Red seaweed).